A 212-amino-acid chain; its full sequence is Ribonuclease HII (212 aa).

The region spanning 12-201 is the RNase H type-2 domain; it reads ELVAGVDEVG…VRAMLEQVSI (190 aa). The a divalent metal cation site is built by Asp18, Glu19, and Asp110.

It belongs to the RNase HII family. Mn(2+) is required as a cofactor. The cofactor is Mg(2+).

It localises to the cytoplasm. The catalysed reaction is Endonucleolytic cleavage to 5'-phosphomonoester.. Functionally, endonuclease that specifically degrades the RNA of RNA-DNA hybrids. In Stutzerimonas stutzeri (strain A1501) (Pseudomonas stutzeri), this protein is Ribonuclease HII.